Reading from the N-terminus, the 435-residue chain is Arginine/serine-rich coiled-coil protein 2 (435 aa).

Basic and acidic residues predominate over residues 1–27 (MAASDTERDGLAPEKTSPDRDKKKEQS). A disordered region spans residues 1–230 (MAASDTERDG…PSPPPFRGRN (230 aa)). An N-acetylalanine modification is found at Ala2. Ser4 carries the post-translational modification Phosphoserine. Phosphothreonine occurs at positions 6 and 16. Phosphoserine is present on residues Ser17, Ser30, and Ser32. Residues 35–51 (ASKHHYSRSRSRSRERK) show a composition bias toward basic residues. Residues 66 to 111 (RSKEARRHESKDKSSKKHKSEEHNDKEHSSDKGRERLNSSENGEDR) are compositionally biased toward basic and acidic residues. Phosphoserine is present on Ser104. Basic residues predominate over residues 112–214 (HKRKERKSSR…KRIEKPRRFS (103 aa)). The stretch at 230 to 270 (NTAMDAQEALARRLERAKKLQEQREKEMVEKQKQQEIAAAA) forms a coiled coil. Lys376 participates in a covalent cross-link: Glycyl lysine isopeptide (Lys-Gly) (interchain with G-Cter in SUMO1); alternate. Residue Lys376 forms a Glycyl lysine isopeptide (Lys-Gly) (interchain with G-Cter in SUMO2); alternate linkage. Ser377 carries the post-translational modification Phosphoserine.

It belongs to the RSRC2 family.

The protein is Arginine/serine-rich coiled-coil protein 2 (RSRC2) of Pongo abelii (Sumatran orangutan).